The primary structure comprises 150 residues: Protein-export protein SecB (150 aa).

The protein belongs to the SecB family. In terms of assembly, homotetramer, a dimer of dimers. One homotetramer interacts with 1 SecA dimer.

It is found in the cytoplasm. Functionally, one of the proteins required for the normal export of preproteins out of the cell cytoplasm. It is a molecular chaperone that binds to a subset of precursor proteins, maintaining them in a translocation-competent state. It also specifically binds to its receptor SecA. The sequence is that of Protein-export protein SecB from Psychrobacter cryohalolentis (strain ATCC BAA-1226 / DSM 17306 / VKM B-2378 / K5).